The following is a 745-amino-acid chain: MSFPGWGPYPPVERDETSAITYSSKLHGSVTVRDPYSQLEVPFEDSEETKAFVHSQRKFARTYLDENPDREAWLETLKKSWNYRRFSALKPESDGHYYFEYNDGLQSQLSLYRVRMGEEDTVLTESGPGGELFFNPNLLSLDGNAALTGFVMSPCGNYWAYGVSEHGSDWMSIYVRKTSSPHLPSQERGKDPGRMNDKIRHVRFFIVSWTSDSKGFFYSRYPPEDDEGKGNAPAMNCMVYYHRIGEDQESDVLVHEDPEHPFWISSVQLTPSGRYILFAASRDASHTQLVKIADLHENDIGTNMKWKNLHDPWEARFTIVGDEGSKIYFMTNLKAKNYKVATFDANHPDEGLTTLIAEDPNAFLVSASIHAQDKLLLVYLRNASHEIHIRDLTTGKPLGRIFEDLLGQFMVSGRRQDNDIFVLFSSFLSPGTVYRYTFGEEKGHSSLFRAISIPGLNLDDFMTESVFYPSKDGTSVHMFITRPKDVLLDGTSPVLQYGYGGFSLAMLPTFSLSTLLFCKIYRAIYAIPNIRGGSEYGESWHREGMLDKKQNVFDDFNAATEWLIANKYASKDRIAIRGGSNGGVLTTACANQAPGLYRCVITIEGIIDMLRFPKFTFGASWRSEYGDPEDPEDFDFIFKYSPYHNIPPPGDTIMPAMLFFTAAYDDRVSPLHTFKHVAALQHNFPKGPNPCLMRIDLNSGHFAGKSTQEMLEETADEYSFIGKSMGLTMQTQGSVDSSRWSCVTV.

Catalysis depends on charge relay system residues S580, D665, and H701.

This sequence belongs to the peptidase S9A family. Monomer.

The catalysed reaction is Hydrolysis of Pro-|-Xaa &gt;&gt; Ala-|-Xaa in oligopeptides.. The protein operates within mycotoxin biosynthesis. Prolyl oligopeptidase; part of the gene cluster that mediates the biosynthesis of omphalotin A, a highly methylated cyclic dodecapeptide with nematodicidal activity. Excises and catalyzes the macrocyclization of the methylated core peptide of OphMA to yield omphalotin A. OphP works in a two-step fashion with an initial cleavage at the N-terminus, followed by a second cleavage at the C-terminus of the core peptide. According to this mechanism, the free N-terminus of the core peptide, generated by the first cleavage, attacks the covalent intermediate of the second cleavage, which results in macrocyclization of the core peptide. The protein is Prolyl oligopeptidase ophP of Omphalotus olearius (Jack o'lantern).